Reading from the N-terminus, the 228-residue chain is uncharacterized protein (228 aa).

A disordered region spans residues 194–228 (SRRADEHPAPSTEPHAAAVAPEPDFMAEPIPALEE).

This is an uncharacterized protein from Treponema pallidum (strain Nichols).